Reading from the N-terminus, the 191-residue chain is Methylated-DNA--protein-cysteine methyltransferase (191 aa).

2 residues coordinate DNA: Y120 and R134. C151 (nucleophile; methyl group acceptor) is an active-site residue.

Belongs to the MGMT family.

It localises to the nucleus. The catalysed reaction is a 6-O-methyl-2'-deoxyguanosine in DNA + L-cysteinyl-[protein] = S-methyl-L-cysteinyl-[protein] + a 2'-deoxyguanosine in DNA. The enzyme catalyses a 4-O-methyl-thymidine in DNA + L-cysteinyl-[protein] = a thymidine in DNA + S-methyl-L-cysteinyl-[protein]. Functionally, involved in the cellular defense against the biological effects of O6-methylguanine (O6-MeG) and O4-methylthymine (O4-MeT) in DNA. Repairs the methylated nucleobase in DNA by stoichiometrically transferring the methyl group to a cysteine residue in the enzyme. This is a suicide reaction: the enzyme is irreversibly inactivated. This is Methylated-DNA--protein-cysteine methyltransferase (MGT1) from Debaryomyces hansenii (strain ATCC 36239 / CBS 767 / BCRC 21394 / JCM 1990 / NBRC 0083 / IGC 2968) (Yeast).